The following is a 379-amino-acid chain: Homoserine O-succinyltransferase (379 aa).

The region spanning 51–360 (NAVLICHALS…DAPQGHDAFL (310 aa)) is the AB hydrolase-1 domain. Residue serine 157 is the Nucleophile of the active site. Residue arginine 227 participates in substrate binding. Catalysis depends on residues aspartate 323 and histidine 356. Substrate is bound at residue aspartate 357.

The protein belongs to the AB hydrolase superfamily. MetX family. As to quaternary structure, homodimer.

It localises to the cytoplasm. It catalyses the reaction L-homoserine + succinyl-CoA = O-succinyl-L-homoserine + CoA. The protein operates within amino-acid biosynthesis; L-methionine biosynthesis via de novo pathway; O-succinyl-L-homoserine from L-homoserine: step 1/1. Transfers a succinyl group from succinyl-CoA to L-homoserine, forming succinyl-L-homoserine. The polypeptide is Homoserine O-succinyltransferase (Pseudomonas fluorescens (strain SBW25)).